Here is a 195-residue protein sequence, read N- to C-terminus: Exosome complex component CSL4 (195 aa).

Position 21 is a phosphoserine (Ser21). Residues 66-147 (DVGAVVTCKV…AQSNYLLTTA (82 aa)) form the S1 motif domain.

Belongs to the CSL4 family. Component of the RNA exosome core complex (Exo-9), composed of EXOSC1, EXOSC2, EXOSC3, EXOSC4, EXOSC5, EXOSC6, EXOSC7, EXOSC8 and EXOSC9; within the complex interacts with EXOSC6. The catalytically inactive RNA exosome core complex (Exo-9) associates with the catalytic subunit EXOSC10/RRP6. Exo-9 may associate with DIS3 to form the nucleolar exosome complex, or DIS3L to form the cytoplasmic exosome complex. Exo-9 is formed by a hexameric base ring consisting of the heterodimers EXOSC4-EXOSC9, EXOSC5-EXOSC8 and EXOSC6-EXOSC7, and a cap ring consisting of EXOSC1, EXOSC2 and EXOSC3. The RNA exosome complex associates with cofactors C1D/RRP47, MPHOSPH6/MPP6 and MTREX/MTR4. Interacts with DDX60.

It localises to the nucleus. The protein localises to the nucleolus. Its subcellular location is the cytoplasm. Functionally, non-catalytic component of the RNA exosome complex which has 3'-&gt;5' exoribonuclease activity and participates in a multitude of cellular RNA processing and degradation events. In the nucleus, the RNA exosome complex is involved in proper maturation of stable RNA species such as rRNA, snRNA and snoRNA, in the elimination of RNA processing by-products and non-coding 'pervasive' transcripts, such as antisense RNA species and promoter-upstream transcripts (PROMPTs), and of mRNAs with processing defects, thereby limiting or excluding their export to the cytoplasm. The RNA exosome may be involved in Ig class switch recombination (CSR) and/or Ig variable region somatic hypermutation (SHM) by targeting AICDA deamination activity to transcribed dsDNA substrates. In the cytoplasm, the RNA exosome complex is involved in general mRNA turnover and specifically degrades inherently unstable mRNAs containing AU-rich elements (AREs) within their 3' untranslated regions, and in RNA surveillance pathways, preventing translation of aberrant mRNAs. It seems to be involved in degradation of histone mRNA. The catalytic inactive RNA exosome core complex of 9 subunits (Exo-9) is proposed to play a pivotal role in the binding and presentation of RNA for ribonucleolysis, and to serve as a scaffold for the association with catalytic subunits and accessory proteins or complexes. EXOSC1 as peripheral part of the Exo-9 complex stabilizes the hexameric ring of RNase PH-domain subunits through contacts with EXOSC6 and EXOSC8. The polypeptide is Exosome complex component CSL4 (Exosc1) (Mus musculus (Mouse)).